Consider the following 178-residue polypeptide: Signal peptidase complex subunit 2 (178 aa).

The Cytoplasmic portion of the chain corresponds to 1-37 (MSSAKPINVYSIPELNQALDEALPSVFARLNYERSYA). The chain crosses the membrane as a helical span at residues 38 to 58 (LLDAKLYIGYSIAVVAGLSFF). Residues 59-67 (LDKKFERDQ) lie on the Lumenal side of the membrane. A helical membrane pass occupies residues 68–88 (IVTYQKLLVGAYFVLSLLFWY). Residues 89 to 178 (FSRFIEKGTV…HNVLDTKKNE (90 aa)) lie on the Cytoplasmic side of the membrane.

It belongs to the SPCS2 family. Component of the signal peptidase complex (SPC) composed of a catalytic subunit SEC11 and three accessory subunits SPC1, SPC2 and SPC3. The complex induces a local thinning of the ER membrane which is used to measure the length of the signal peptide (SP) h-region of protein substrates. This ensures the selectivity of the complex towards h-regions shorter than 18-20 amino acids. SPC associates with the translocon complex. Interacts with SBH1 and SEB2/SBH2.

The protein resides in the endoplasmic reticulum membrane. Functionally, component of the signal peptidase complex (SPC) which catalyzes the cleavage of N-terminal signal sequences from nascent proteins as they are translocated into the lumen of the endoplasmic reticulum. Enhances the enzymatic activity of SPC and facilitates the interactions between different components of the translocation site. The polypeptide is Signal peptidase complex subunit 2 (SPC2) (Saccharomyces cerevisiae (strain ATCC 204508 / S288c) (Baker's yeast)).